The chain runs to 498 residues: ADP,ATP carrier protein 1 (498 aa).

The Cytoplasmic segment spans residues 1–33; that stretch reads MNNPKNDNYLSELSKVIWPIERYENKKFLPMAF. The helical transmembrane segment at 34–54 threads the bilayer; it reads MMFCILLNYSTLRSIKDGFVV. Cys37 and Cys85 are oxidised to a cystine. Residues 55–67 are Extracellular-facing; the sequence is TDIGAEAISFLKT. Residues 68–88 form a helical membrane-spanning segment; that stretch reads YIVLPSAVIAMVIYVKLCDIL. Over 89-92 the chain is Cytoplasmic; it reads KQEN. Residues 93-113 traverse the membrane as a helical segment; it reads VFYVITSFFLGYFALFAFVLY. At 114-147 the chain is on the extracellular side; that stretch reads PYPDLVHPDPETIESWSVAYPNVKWFIRIVGKWS. The helical transmembrane segment at 148–168 threads the bilayer; it reads FASFYTMAELWGTMMLSLLFW. Residues 169-184 lie on the Cytoplasmic side of the membrane; the sequence is QFANQITKTDEAKRFY. A helical membrane pass occupies residues 185-205; it reads SMFGLLANLALPVTSVIIGYC. Residues 206–218 lie on the Extracellular side of the membrane; the sequence is LHEKTQIVAEHLK. Residues 219–239 traverse the membrane as a helical segment; sequence FVPLFVIMITSSFLVILTYRW. Over 240–279 the chain is Cytoplasmic; sequence MNKNVLTDPRLYDPALVKEKKAKAKMSLIDSFKMIFTSKY. The chain crosses the membrane as a helical span at residues 280 to 300; it reads VGYIALLLIAYGVSVNLVEGV. The Extracellular segment spans residues 301 to 320; sequence WKSKVKELYPTKEAYTIYMG. The chain crosses the membrane as a helical span at residues 321–341; it reads KFQFYQGWVAIAFMLIGSNIL. Residues 342-348 are Cytoplasmic-facing; it reads RKVSWLT. A helical membrane pass occupies residues 349 to 369; sequence AAMITPLMMLITGAAFFAFIF. The Extracellular portion of the chain corresponds to 370–379; sequence FDSVIAMHLT. A helical transmembrane segment spans residues 380-400; the sequence is GILASGPLALAVMIGMIQNVL. Over 401–438 the chain is Cytoplasmic; it reads SKGVKYSLFDATKNMAYIPLDKDLRVKGQAAVEVIGGR. 436–442 serves as a coordination point for ATP; that stretch reads GGRFGKS. The chain crosses the membrane as a helical span at residues 439–459; it reads FGKSGGAIIQSTFFILFPAFG. Over 460-465 the chain is Extracellular; it reads FVEATP. A helical membrane pass occupies residues 466–486; the sequence is YFASIFFVIVILWIYAVKGLN. At 487 to 498 the chain is on the cytoplasmic side; that stretch reads KEYKVLVNKTEK.

Belongs to the ADP/ATP translocase tlc family.

The protein resides in the cell membrane. In terms of biological role, provides the rickettsial cell with host ATP in exchange for rickettsial ADP. This is an obligate exchange system. This energy acquiring activity is an important component of rickettsial parasitism. This Rickettsia conorii (strain ATCC VR-613 / Malish 7) protein is ADP,ATP carrier protein 1 (tlcA).